A 186-amino-acid chain; its full sequence is Imidazoleglycerol-phosphate dehydratase (186 aa).

This sequence belongs to the imidazoleglycerol-phosphate dehydratase family.

The protein localises to the cytoplasm. It carries out the reaction D-erythro-1-(imidazol-4-yl)glycerol 3-phosphate = 3-(imidazol-4-yl)-2-oxopropyl phosphate + H2O. It functions in the pathway amino-acid biosynthesis; L-histidine biosynthesis; L-histidine from 5-phospho-alpha-D-ribose 1-diphosphate: step 6/9. The sequence is that of Imidazoleglycerol-phosphate dehydratase from Dictyoglomus turgidum (strain DSM 6724 / Z-1310).